The sequence spans 468 residues: UDP-N-acetylmuramate--L-alanine ligase (468 aa).

112–118 provides a ligand contact to ATP; the sequence is GTHGKTT.

The protein belongs to the MurCDEF family.

The protein localises to the cytoplasm. It carries out the reaction UDP-N-acetyl-alpha-D-muramate + L-alanine + ATP = UDP-N-acetyl-alpha-D-muramoyl-L-alanine + ADP + phosphate + H(+). The protein operates within cell wall biogenesis; peptidoglycan biosynthesis. Its function is as follows. Cell wall formation. The protein is UDP-N-acetylmuramate--L-alanine ligase of Bordetella bronchiseptica (strain ATCC BAA-588 / NCTC 13252 / RB50) (Alcaligenes bronchisepticus).